The following is a 178-amino-acid chain: Ribosome maturation factor RimM (178 aa).

Positions 99-178 (EGDYYWHDLI…TIEVDWDAGF (80 aa)) constitute a PRC barrel domain.

The protein belongs to the RimM family. Binds ribosomal protein uS19.

The protein localises to the cytoplasm. Its function is as follows. An accessory protein needed during the final step in the assembly of 30S ribosomal subunit, possibly for assembly of the head region. Essential for efficient processing of 16S rRNA. May be needed both before and after RbfA during the maturation of 16S rRNA. It has affinity for free ribosomal 30S subunits but not for 70S ribosomes. This chain is Ribosome maturation factor RimM, found in Haemophilus influenzae (strain ATCC 51907 / DSM 11121 / KW20 / Rd).